The following is a 72-amino-acid chain: Defensin-like protein 230 (72 aa).

The signal sequence occupies residues 1-27; that stretch reads MEKKSLACLSFLLLVLFVAQEIVVSEA. Intrachain disulfides connect Cys-30–Cys-72, Cys-41–Cys-60, Cys-45–Cys-66, and Cys-49–Cys-68.

It belongs to the DEFL family.

The protein resides in the secreted. In Pisum sativum (Garden pea), this protein is Defensin-like protein 230 (PI230).